A 250-amino-acid polypeptide reads, in one-letter code: DNA polymerase sliding clamp (250 aa).

This sequence belongs to the PCNA family. In terms of assembly, homotrimer. The subunits circularize to form a toroid; DNA passes through its center. Replication factor C (RFC) is required to load the toroid on the DNA.

Sliding clamp subunit that acts as a moving platform for DNA processing. Responsible for tethering the catalytic subunit of DNA polymerase and other proteins to DNA during high-speed replication. The sequence is that of DNA polymerase sliding clamp from Methanococcus maripaludis (strain C5 / ATCC BAA-1333).